The chain runs to 129 residues: Glycine cleavage system H protein (129 aa).

The Lipoyl-binding domain maps to 24–106 (TFTVGISEHA…YGDGWLFRIK (83 aa)). At Lys65 the chain carries N6-lipoyllysine.

This sequence belongs to the GcvH family. In terms of assembly, the glycine cleavage system is composed of four proteins: P, T, L and H. Requires (R)-lipoate as cofactor.

Its function is as follows. The glycine cleavage system catalyzes the degradation of glycine. The H protein shuttles the methylamine group of glycine from the P protein to the T protein. This chain is Glycine cleavage system H protein, found in Idiomarina loihiensis (strain ATCC BAA-735 / DSM 15497 / L2-TR).